The following is a 385-amino-acid chain: Putative RNA methyltransferase YpsC (385 aa).

Positions 44-156 constitute a THUMP domain; sequence AICRANLWLR…KDQALITLDS (113 aa).

It belongs to the methyltransferase superfamily. In terms of assembly, interacts with the RNA polymerase core.

This chain is Putative RNA methyltransferase YpsC (ypsC), found in Bacillus subtilis (strain 168).